The chain runs to 62 residues: DNA gyrase inhibitor YacG (62 aa).

Zn(2+) contacts are provided by cysteine 9, cysteine 12, cysteine 27, and cysteine 31. The segment covering 43 to 53 (GYRIPGEKAPE) has biased composition (basic and acidic residues). The segment at 43–62 (GYRIPGEKAPESGDEEPGDE) is disordered.

Belongs to the DNA gyrase inhibitor YacG family. In terms of assembly, interacts with GyrB. Zn(2+) serves as cofactor.

Functionally, inhibits all the catalytic activities of DNA gyrase by preventing its interaction with DNA. Acts by binding directly to the C-terminal domain of GyrB, which probably disrupts DNA binding by the gyrase. The chain is DNA gyrase inhibitor YacG from Citrifermentans bemidjiense (strain ATCC BAA-1014 / DSM 16622 / JCM 12645 / Bem) (Geobacter bemidjiensis).